A 1050-amino-acid polypeptide reads, in one-letter code: uncharacterized protein (1050 aa).

Over 1 to 83 (MARLLTKSSQ…AVKLGTFEGC (83 aa)) the chain is Cytoplasmic. Phosphoserine is present on residues Ser-9 and Ser-60. Position 64 is a phosphothreonine (Thr-64). A helical transmembrane segment spans residues 84–104 (FIPTTLNVLSILLYLRFPWII). Over 105 to 112 (GEAGVLKT) the chain is Extracellular. The chain crosses the membrane as a helical span at residues 113–133 (LLMLFISYAVGIFTSLSISAI). The Cytoplasmic portion of the chain corresponds to 134–146 (CTNGMVRGGGAYY). A helical transmembrane segment spans residues 147–169 (AVSRSIGPELGGSIGLIFYVGQI). Residues 170-202 (LNTGMNISGFVEPIISIFGKESGTISQFLPEGY) lie on the Extracellular side of the membrane. N-linked (GlcNAc...) asparagine glycosylation occurs at Asn-175. A helical transmembrane segment spans residues 203–223 (WWVFLYTTCVLAMCCILCCLG). The Cytoplasmic segment spans residues 224–232 (SAIFAKASN). A helical membrane pass occupies residues 233–253 (ALFVVIILSTISIPISSIFVH). Topologically, residues 254–295 (PFKDPSLLVHFTGLKWSTLMKNLASAYTENEKGTGYESFKST) are extracellular. Phosphoserine is present on Ser-270. A Phosphothreonine modification is found at Thr-271. Residues 296 to 316 (FGVFFPATAGLLAGASMSGDL) form a helical membrane-spanning segment. Topologically, residues 317–334 (KAPSRSIPKGTISSQATT) are cytoplasmic. Residues 335–355 (FLLYLLVILCVGASVTRTGLL) form a helical membrane-spanning segment. The Extracellular segment spans residues 356 to 368 (LDMDVMEHISLHP). Residues 369 to 389 (LFIISGILSSGAFSSFMGIFG) form a helical membrane-spanning segment. Topologically, residues 390-417 (AAKLLQAIARDDLIPGMFFFAKGSSYDD) are cytoplasmic. Residues 418 to 438 (IPYVAIGVTYLITQISLFWDI) traverse the membrane as a helical segment. Over 439–442 (NMLS) the chain is Extracellular. The helical transmembrane segment at 443–463 (SMITMTFLLTFGFINLSCFLL) threads the bilayer. Over 464–480 (RISSTPNFRPTFRYFNR) the chain is Cytoplasmic. Residues 481-497 (RTTLVGTILSFGVMFYV) form a helical membrane-spanning segment. The Extracellular portion of the chain corresponds to 498-499 (DR). Residues 500–520 (LNAFISFLIAGILVVVIYFTC) traverse the membrane as a helical segment. Over 521 to 1050 (PPKNWGDVSQ…SKSLTITTAL (530 aa)) the chain is Cytoplasmic. The residue at position 901 (Ser-901) is a Phosphoserine. Residues 915–943 (ETESSFGNRSLSPKQENRRTYSDSTIESS) form a disordered region. Over residues 916-928 (TESSFGNRSLSPK) the composition is skewed to polar residues. Ser-936 is modified (phosphoserine). Thr-939 is modified (phosphothreonine).

The protein belongs to the SLC12A transporter family.

Its subcellular location is the membrane. This is an uncharacterized protein from Schizosaccharomyces pombe (strain 972 / ATCC 24843) (Fission yeast).